The sequence spans 337 residues: Glucose transporter 2C (337 aa).

Positions 1-22 are disordered; that stretch reads MTERRDNVSHAPDAIEGPNDGA. Topologically, residues 1–43 are cytoplasmic; that stretch reads MTERRDNVSHAPDAIEGPNDGAHAEDTSPGFFSLENLGVAQVQ. A helical membrane pass occupies residues 44-64; it reads VVGGTLNGFSIGFVAVYILLY. The Extracellular segment spans residues 65–119; sequence EVATNCSLFKTTEACKAVGSYGCEWKDTEVCSWKKECDSDSDGVNPCESLIGYSS. N69 is a glycosylation site (N-linked (GlcNAc...) asparagine). A helical transmembrane segment spans residues 120 to 140; the sequence is LYSGIFASAMIVGSMVGSIIA. The Cytoplasmic portion of the chain corresponds to 141–152; it reads GKCITMFGLKKS. Residues 153-173 traverse the membrane as a helical segment; it reads FIIVGVMSVVASALNHISVAT. Over 174–175 the chain is Extracellular; sequence NE. The chain crosses the membrane as a helical span at residues 176–196; the sequence is FWVLCAGRVLMGIGLGVVCVI. The Cytoplasmic portion of the chain corresponds to 197–214; sequence CPMYVNENAHPKLSKVDG. The chain crosses the membrane as a helical span at residues 215–235; the sequence is VLFQVFITFGIMLAAMLGLIL. At 236-250 the chain is on the extracellular side; sequence DKTVNYDNDPDMAGR. The chain crosses the membrane as a helical span at residues 251–271; that stretch reads FHGFCAVSSVLSVAMFLVGMF. Residues 272–300 are Cytoplasmic-facing; sequence LRESTATFSQDDDGKADGGMDPNEYGWGQ. The chain crosses the membrane as a helical span at residues 301–321; the sequence is MLWPLFMGAVTAGTLQLTGIN. Topologically, residues 322–337 are extracellular; sequence AVMNYAPKITENLGMD.

This sequence belongs to the major facilitator superfamily. Sugar transporter (TC 2.A.1.1) family.

The protein localises to the membrane. Facilitative glucose transporter. The sequence is that of Glucose transporter 2C (THT2C) from Trypanosoma brucei brucei.